Consider the following 554-residue polypeptide: Sesquiterpene synthase 14a (554 aa).

Residues Asp-305, Asp-309, Asp-449, and Glu-457 each coordinate Mg(2+). The short motif at 305–309 (DDLYD) is the DDXXD motif element.

It belongs to the terpene synthase family. Tpsa subfamily. It depends on Mg(2+) as a cofactor. The cofactor is Mn(2+). In terms of tissue distribution, mostly expressed in stem trichomes.

It carries out the reaction (2E,6E)-farnesyl diphosphate = beta-bisabolene + diphosphate. The enzyme catalyses (2E,6E)-farnesyl diphosphate = (Z)-alpha-bisabolene + diphosphate. It catalyses the reaction (2E,6E)-farnesyl diphosphate = beta-acoradiene + diphosphate. The catalysed reaction is (2E,6E)-farnesyl diphosphate = (E)-gamma-bisabolene + diphosphate. It carries out the reaction (2E,6E)-farnesyl diphosphate = (E)-beta-farnesene + diphosphate. The enzyme catalyses (2E,6E)-farnesyl diphosphate = (Z)-beta-farnesene + diphosphate. It catalyses the reaction (2E)-geranyl diphosphate = limonene + diphosphate. The catalysed reaction is (2E)-geranyl diphosphate = beta-myrcene + diphosphate. It functions in the pathway secondary metabolite biosynthesis; terpenoid biosynthesis. Its function is as follows. Sesquiterpene synthase involved in the biosynthesis of volatile compounds. Mediates the conversion of (2E,6E)-farnesyl diphosphate ((EE)-FPP) into beta-bisabolene, beta-farnesene, (E)-gamma-bisabolene, beta-acoradiene, selinene and (Z)-alpha-bisabolene. Low or no activity with (2Z,6Z)-farnesyl diphosphate ((ZZ)-FPP). Can act with a low efficiency as a monoterpene synthase with geranyl diphosphate (GPP) as substrate, thus producing beta-myrcene and limonene. In Solanum habrochaites (Wild tomato), this protein is Sesquiterpene synthase 14a.